Here is a 295-residue protein sequence, read N- to C-terminus: Protease HtpX (295 aa).

2 helical membrane passes run 4–24 (ILLF…TLSL) and 41–61 (SSLL…SLFI). H147 provides a ligand contact to Zn(2+). E148 is a catalytic residue. H151 contributes to the Zn(2+) binding site. The next 2 membrane-spanning stretches (helical) occupy residues 158 to 178 (VTLA…ARII) and 199 to 219 (VATI…VMWF). Zn(2+) is bound at residue E224.

This sequence belongs to the peptidase M48B family. Requires Zn(2+) as cofactor.

The protein localises to the cell inner membrane. The sequence is that of Protease HtpX from Pseudomonas putida (strain ATCC 700007 / DSM 6899 / JCM 31910 / BCRC 17059 / LMG 24140 / F1).